The sequence spans 138 residues: ATP synthase epsilon chain (138 aa).

Belongs to the ATPase epsilon chain family. As to quaternary structure, F-type ATPases have 2 components, CF(1) - the catalytic core - and CF(0) - the membrane proton channel. CF(1) has five subunits: alpha(3), beta(3), gamma(1), delta(1), epsilon(1). CF(0) has four main subunits: a(1), b(1), b'(1) and c(9-12).

It is found in the cellular thylakoid membrane. Functionally, produces ATP from ADP in the presence of a proton gradient across the membrane. The complex from the organism is particularly stable to disruption and remains functional after 6 hours at 55 degrees Celsius. This Thermosynechococcus vestitus (strain NIES-2133 / IAM M-273 / BP-1) protein is ATP synthase epsilon chain.